A 497-amino-acid polypeptide reads, in one-letter code: Cytoplasmic dynein 1 light intermediate chain 2 (497 aa).

61–68 (GEDGSGKT) lines the ATP pocket. Disordered regions lie at residues 187–206 (PEEGCQGSPQRRGPLTSGSD), 366–408 (QQES…IKNN), 423–461 (LSKKTGSPGSPSAGGVQSTAKKSGTEGEPQSFRSLTEQC), and 474–497 (QEELDRMTRKPDSMVTNSSTENEA). Phosphoserine occurs at positions 194, 369, and 377. Arg-383 carries the omega-N-methylarginine modification. The span at 423–444 (LSKKTGSPGSPSAGGVQSTAKK) shows a compositional bias: polar residues. Thr-427 bears the Phosphothreonine mark. Phosphoserine is present on residues Ser-429 and Ser-432. Over residues 476–485 (ELDRMTRKPD) the composition is skewed to basic and acidic residues. Residues 487–497 (MVTNSSTENEA) show a composition bias toward polar residues.

This sequence belongs to the dynein light intermediate chain family. Homodimer. The cytoplasmic dynein 1 complex consists of two catalytic heavy chains (HCs) and a number of non-catalytic subunits presented by intermediate chains (ICs), light intermediate chains (LICs) and light chains (LCs); the composition seems to vary in respect to the IC, LIC and LC composition. The heavy chain homodimer serves as a scaffold for the probable homodimeric assembly of the respective non-catalytic subunits. The ICs and LICs bind directly to the HC dimer and the LCs assemble on the IC dimer. Self-associates. Interacts with DYNC1H1; DYNC1LI1 and DYNC1LI2 bind mutually exclusive to DYNC1H1. As to expression, ubiquitous.

The protein resides in the cytoplasm. It is found in the cytoskeleton. Functionally, acts as one of several non-catalytic accessory components of the cytoplasmic dynein 1 complex that are thought to be involved in linking dynein to cargos and to adapter proteins that regulate dynein function. Cytoplasmic dynein 1 acts as a motor for the intracellular retrograde motility of vesicles and organelles along microtubules. May play a role in binding dynein to membranous organelles or chromosomes. The polypeptide is Cytoplasmic dynein 1 light intermediate chain 2 (Dync1li2) (Rattus norvegicus (Rat)).